Consider the following 296-residue polypeptide: tRNA dimethylallyltransferase (296 aa).

Residue 2-9 participates in ATP binding; sequence GPTASGKT. Residue 4-9 coordinates substrate; the sequence is TASGKT. Interaction with substrate tRNA stretches follow at residues 27-30, 151-155, and 232-237; these read DSAL, QRLSR, and RCVGYR.

Belongs to the IPP transferase family. As to quaternary structure, monomer. Mg(2+) serves as cofactor.

It catalyses the reaction adenosine(37) in tRNA + dimethylallyl diphosphate = N(6)-dimethylallyladenosine(37) in tRNA + diphosphate. Its function is as follows. Catalyzes the transfer of a dimethylallyl group onto the adenine at position 37 in tRNAs that read codons beginning with uridine, leading to the formation of N6-(dimethylallyl)adenosine (i(6)A). The chain is tRNA dimethylallyltransferase from Shewanella sp. (strain MR-4).